The primary structure comprises 157 residues: 6,7-dimethyl-8-ribityllumazine synthase (157 aa).

5-amino-6-(D-ribitylamino)uracil is bound by residues Phe25, 59–61, and 83–85; these read AME and AII. Position 88 to 89 (88 to 89) interacts with (2S)-2-hydroxy-3-oxobutyl phosphate; sequence ST. His91 functions as the Proton donor in the catalytic mechanism. Position 116 (Phe116) interacts with 5-amino-6-(D-ribitylamino)uracil. Residue Arg130 coordinates (2S)-2-hydroxy-3-oxobutyl phosphate.

It belongs to the DMRL synthase family.

It catalyses the reaction (2S)-2-hydroxy-3-oxobutyl phosphate + 5-amino-6-(D-ribitylamino)uracil = 6,7-dimethyl-8-(1-D-ribityl)lumazine + phosphate + 2 H2O + H(+). It functions in the pathway cofactor biosynthesis; riboflavin biosynthesis; riboflavin from 2-hydroxy-3-oxobutyl phosphate and 5-amino-6-(D-ribitylamino)uracil: step 1/2. In terms of biological role, catalyzes the formation of 6,7-dimethyl-8-ribityllumazine by condensation of 5-amino-6-(D-ribitylamino)uracil with 3,4-dihydroxy-2-butanone 4-phosphate. This is the penultimate step in the biosynthesis of riboflavin. In Lawsonia intracellularis (strain PHE/MN1-00), this protein is 6,7-dimethyl-8-ribityllumazine synthase.